A 312-amino-acid polypeptide reads, in one-letter code: Isethionate sulfite-lyase activating enzyme (312 aa).

Residues 20 to 304 (HDGPGIRTIV…GLQKTALDIL (285 aa)) form the Radical SAM core domain. Residues cysteine 34, cysteine 38, cysteine 41, cysteine 60, cysteine 66, cysteine 69, cysteine 73, cysteine 93, cysteine 96, cysteine 100, and cysteine 104 each contribute to the [4Fe-4S] cluster site. 40 to 42 (WCS) lines the S-adenosyl-L-methionine pocket. 2 4Fe-4S ferredoxin-type domains span residues 51-83 (AELA…CGDD) and 84-115 (DKPR…YGKK). S-adenosyl-L-methionine contacts are provided by residues glycine 144, 193 to 195 (DIK), and histidine 267.

Belongs to the organic radical-activating enzymes family. Monomer. The cofactor is [4Fe-4S] cluster.

The catalysed reaction is glycyl-[protein] + reduced [flavodoxin] + S-adenosyl-L-methionine = glycin-2-yl radical-[protein] + semiquinone [flavodoxin] + 5'-deoxyadenosine + L-methionine + H(+). It functions in the pathway organosulfur degradation; alkanesulfonate degradation. Functionally, involved in an anaerobic respiration pathway that converts the sulfonate isethionate (2-hydroxyethanesulfonate) to ammonia, acetate and sulfide. Catalyzes activation of the isethionate sulfite-lyase IslA under anaerobic conditions by generation of an organic free radical on a glycine residue, via a homolytic cleavage of S-adenosyl-L-methionine (SAM). This is Isethionate sulfite-lyase activating enzyme from Desulfovibrio desulfuricans (strain ATCC 27774 / DSM 6949 / MB).